Reading from the N-terminus, the 1649-residue chain is Cortactin-binding protein 2 (1649 aa).

Residues 1–23 (MATDGASCEPDLSRAPEDAAGAA) are disordered. A coiled-coil region spans residues 119 to 276 (RKMQERMSAQ…EQLKRGSDSK (158 aa)). Disordered regions lie at residues 366 to 440 (IGVS…LHPG) and 454 to 478 (GNANDPDQNGNTTQSPPSRDVSPTS). Low complexity-rich tracts occupy residues 368 to 379 (VSVPAFPPSSAS) and 386 to 396 (PSTGSTPDPTS). The span at 411 to 422 (QTPGITPQNSQA) shows a compositional bias: polar residues. Arginine 498 is modified (asymmetric dimethylarginine). The segment at 499 to 616 (FTGPQAGAPP…SSPQLPPKPS (118 aa)) is disordered. A compositionally biased stretch (polar residues) spans 583–593 (TVASPPSSLPQ). ANK repeat units follow at residues 709 to 739 (GRPTLLQQAAAQGNVTLLSMLLNEEGLDINY), 743 to 772 (DGHSALYSAAKNGHTDCVRLLLSAEAQVNA), 776 to 805 (NGFTPLCAAAAQGHFKCVELLIAYDANINH), 809 to 838 (GGQTPLYLACKNGNKECIKLLLEAGTDRSV), and 842 to 871 (DGWTPVHAAVDTGNVDSLKLLMYHRVPAHG). The interval 872–897 (NSFSEEESESGVFDLDGGEESPEGKS) is disordered. The ANK 6 repeat unit spans residues 912–942 (EGWTAAHIAASKGFKNCLEILCRHGGLETER). The tract at residues 1444 to 1482 (SCSKKKGESGAWRRVNTSPRRKSSRFSLPTWNKPDLSNE) is disordered. The residue at position 1524 (serine 1524) is a Phosphoserine. The interval 1616–1649 (PRSKVTQCSQNTKRSSSSSNTRQIEINNNSKEEN) is disordered. The span at 1624–1638 (SQNTKRSSSSSNTRQ) shows a compositional bias: low complexity. Residues 1639–1649 (IEINNNSKEEN) show a composition bias toward polar residues.

As to quaternary structure, interacts with CTTN/cortactin SH3 domain. Interacts with STRN, STRN4/zinedin and MOB4/phocein; this interactions mediate the association with the STRIPAK core complex and may regulate dendritic spine distribution of the STRIPAK complex in hippocampal neurons. Activation of glutamate receptors weakens the interaction with STRN and STRN4.

The protein resides in the cytoplasm. It is found in the cell cortex. It localises to the cell projection. Its subcellular location is the dendritic spine. In terms of biological role, regulates the dendritic spine distribution of CTTN/cortactin in hippocampal neurons, and thus controls dendritic spinogenesis and dendritic spine maintenance. Associates with the striatin-interacting phosphatase and kinase (STRIPAK) core complex to regulate dendritic spine distribution of the STRIPAK complex in hippocampal neurons. The polypeptide is Cortactin-binding protein 2 (CTTNBP2) (Aotus nancymaae (Ma's night monkey)).